A 415-amino-acid polypeptide reads, in one-letter code: Probable G-protein coupled receptor 19 (415 aa).

Over 1–69 (MVFAHRMDNS…LKPGEVATAS (69 aa)) the chain is Extracellular. N-linked (GlcNAc...) asparagine glycosylation is found at asparagine 25 and asparagine 52. The helical transmembrane segment at 70–90 (IFFGILWLFSIFGNSLVCLVI) threads the bilayer. At 91 to 102 (HRSRRTQSTTNY) the chain is on the cytoplasmic side. Residues 103-123 (FVVSMACADLLISVASTPFVL) form a helical membrane-spanning segment. The Extracellular portion of the chain corresponds to 124–143 (LQFTTGRWTLGSATCKVVRY). A disulfide bridge links cysteine 138 with cysteine 210. Residues 144-161 (FQYLTPGVQIYVLLSICI) traverse the membrane as a helical segment. Residues 162-182 (DRFYTIVYPLSFKVSREKAKK) are Cytoplasmic-facing. Residues 183–203 (MIAASWVFDAGFVTPVLFFYG) form a helical membrane-spanning segment. Residues 204-221 (SNWDSHCNYFLPSSWEGT) are Extracellular-facing. A helical transmembrane segment spans residues 222-242 (AYTVIHFLVGFVIPSVLIILF). At 243 to 277 (YQKVIKYIWRIGTDGRTVRRTMNIVPRTKVKTIKM) the chain is on the cytoplasmic side. Residues 278 to 298 (FLILNLLFLLSWLPFHVAQLW) traverse the membrane as a helical segment. The Extracellular portion of the chain corresponds to 299–309 (HPHEQDYKKSS). The helical transmembrane segment at 310–325 (LVFTAITWISFSSSAS) threads the bilayer. Topologically, residues 326–415 (KPTLYSIYNA…INSNPPNTFV (90 aa)) are cytoplasmic.

This sequence belongs to the G-protein coupled receptor 1 family. In terms of tissue distribution, abundant expression in the brain.

It is found in the cell membrane. In terms of biological role, G-protein coupled receptor that plays a role in the regulation of circadian rhythms and energy metabolism. Participates in maintaining proper circadian gene expression in the suprachiasmatic nucleus (SCN), the locus of the master circadian clock in the brain. May function as a coordinator of aging-associated metabolic dysfunction, stress response, DNA integrity management, and eventual senescence. Upon binding to adropin, modulates mitochondrial energy metabolism via the p44/42-PDK4 signaling pathway, influencing pyruvate dehydrogenase activity. The polypeptide is Probable G-protein coupled receptor 19 (GPR19) (Homo sapiens (Human)).